The following is a 356-amino-acid chain: Holliday junction branch migration complex subunit RuvB (356 aa).

The large ATPase domain (RuvB-L) stretch occupies residues 13–201; sequence SSNLSRKTRL…FGITQRLNFY (189 aa). The interval 15–35 is disordered; sequence NLSRKTRLLDPTPSLEEGKVR. Residues leucine 40, arginine 41, glycine 82, lysine 85, threonine 86, threonine 87, 148-150, arginine 191, tyrosine 201, and arginine 238 contribute to the ATP site; that span reads EDF. Threonine 86 contacts Mg(2+). Residues 202-273 form a small ATPAse domain (RuvB-S) region; it reads SISDLNRIIQ…LVDKSLTLHQ (72 aa). Residues 276-356 form a head domain (RuvB-H) region; the sequence is ECGLDQSDRR…NSCKNSPIIK (81 aa). Residues arginine 331 and arginine 336 each contribute to the DNA site.

The protein belongs to the RuvB family. In terms of assembly, homohexamer. Forms an RuvA(8)-RuvB(12)-Holliday junction (HJ) complex. HJ DNA is sandwiched between 2 RuvA tetramers; dsDNA enters through RuvA and exits via RuvB. An RuvB hexamer assembles on each DNA strand where it exits the tetramer. Each RuvB hexamer is contacted by two RuvA subunits (via domain III) on 2 adjacent RuvB subunits; this complex drives branch migration. In the full resolvosome a probable DNA-RuvA(4)-RuvB(12)-RuvC(2) complex forms which resolves the HJ.

It is found in the cytoplasm. The catalysed reaction is ATP + H2O = ADP + phosphate + H(+). In terms of biological role, the RuvA-RuvB-RuvC complex processes Holliday junction (HJ) DNA during genetic recombination and DNA repair, while the RuvA-RuvB complex plays an important role in the rescue of blocked DNA replication forks via replication fork reversal (RFR). RuvA specifically binds to HJ cruciform DNA, conferring on it an open structure. The RuvB hexamer acts as an ATP-dependent pump, pulling dsDNA into and through the RuvAB complex. RuvB forms 2 homohexamers on either side of HJ DNA bound by 1 or 2 RuvA tetramers; 4 subunits per hexamer contact DNA at a time. Coordinated motions by a converter formed by DNA-disengaged RuvB subunits stimulates ATP hydrolysis and nucleotide exchange. Immobilization of the converter enables RuvB to convert the ATP-contained energy into a lever motion, pulling 2 nucleotides of DNA out of the RuvA tetramer per ATP hydrolyzed, thus driving DNA branch migration. The RuvB motors rotate together with the DNA substrate, which together with the progressing nucleotide cycle form the mechanistic basis for DNA recombination by continuous HJ branch migration. Branch migration allows RuvC to scan DNA until it finds its consensus sequence, where it cleaves and resolves cruciform DNA. The sequence is that of Holliday junction branch migration complex subunit RuvB from Prochlorococcus marinus (strain SARG / CCMP1375 / SS120).